Consider the following 276-residue polypeptide: NH(3)-dependent NAD(+) synthetase (276 aa).

43–50 contributes to the ATP binding site; the sequence is GISGGVDS. Residue aspartate 49 coordinates Mg(2+). Arginine 146 contacts deamido-NAD(+). Threonine 166 contacts ATP. Glutamate 171 contacts Mg(2+). The deamido-NAD(+) site is built by lysine 179 and aspartate 186. The ATP site is built by lysine 195 and threonine 217. Residue 266–267 coordinates deamido-NAD(+); sequence HK.

The protein belongs to the NAD synthetase family. Homodimer.

The catalysed reaction is deamido-NAD(+) + NH4(+) + ATP = AMP + diphosphate + NAD(+) + H(+). Its pathway is cofactor biosynthesis; NAD(+) biosynthesis; NAD(+) from deamido-NAD(+) (ammonia route): step 1/1. Its function is as follows. Catalyzes the ATP-dependent amidation of deamido-NAD to form NAD. Uses ammonia as a nitrogen source. This Psychromonas ingrahamii (strain DSM 17664 / CCUG 51855 / 37) protein is NH(3)-dependent NAD(+) synthetase.